A 470-amino-acid polypeptide reads, in one-letter code: Uronate isomerase (470 aa).

The protein belongs to the metallo-dependent hydrolases superfamily. Uronate isomerase family.

The catalysed reaction is D-glucuronate = D-fructuronate. It catalyses the reaction aldehydo-D-galacturonate = keto-D-tagaturonate. It participates in carbohydrate metabolism; pentose and glucuronate interconversion. The polypeptide is Uronate isomerase (Escherichia coli O8 (strain IAI1)).